A 601-amino-acid chain; its full sequence is Replication protein A 70 kDa DNA-binding subunit (601 aa).

Residues 107-172 (MPGKIGDPTP…NTPGGSSKVV (66 aa)) form a disordered region. Low complexity predominate over residues 124-135 (APSTAPAPTARP). Positions 137–153 (QPQNGSDGSTYRPSAQS) are enriched in polar residues. The segment at residues 184–268 (WTIRARVTNK…LKNDYEMTLN (85 aa)) is a DNA-binding region (OB). Ser370 carries the post-translational modification Phosphoserine. Residues 466–488 (CPSKDCNKKVVDQQNGMFRCEKC) form a C4-type zinc finger.

It belongs to the replication factor A protein 1 family. Component of the heterotrimeric canonical replication protein A complex (RPA).

It localises to the nucleus. It is found in the PML body. Its function is as follows. As part of the heterotrimeric replication protein A complex (RPA/RP-A), binds and stabilizes single-stranded DNA intermediates, that form during DNA replication or upon DNA stress. It prevents their reannealing and in parallel, recruits and activates different proteins and complexes involved in DNA metabolism. Thereby, it plays an essential role both in DNA replication and the cellular response to DNA damage. The sequence is that of Replication protein A 70 kDa DNA-binding subunit (rpa1) from Danio rerio (Zebrafish).